The sequence spans 181 residues: Protein GrpE (181 aa).

The span at 1-20 shows a compositional bias: polar residues; the sequence is MENTQENPASQSAEENGSET. The disordered stretch occupies residues 1–39; it reads MENTQENPASQSAEENGSETQAAQDAAPAAEAADAALAE. Low complexity predominate over residues 21–39; it reads QAAQDAAPAAEAADAALAE.

This sequence belongs to the GrpE family. Homodimer.

The protein localises to the cytoplasm. Participates actively in the response to hyperosmotic and heat shock by preventing the aggregation of stress-denatured proteins, in association with DnaK and GrpE. It is the nucleotide exchange factor for DnaK and may function as a thermosensor. Unfolded proteins bind initially to DnaJ; upon interaction with the DnaJ-bound protein, DnaK hydrolyzes its bound ATP, resulting in the formation of a stable complex. GrpE releases ADP from DnaK; ATP binding to DnaK triggers the release of the substrate protein, thus completing the reaction cycle. Several rounds of ATP-dependent interactions between DnaJ, DnaK and GrpE are required for fully efficient folding. The chain is Protein GrpE from Burkholderia multivorans (strain ATCC 17616 / 249).